Here is a 355-residue protein sequence, read N- to C-terminus: Sesquiterpene synthase MAJ_08936 (355 aa).

Mg(2+) contacts are provided by Asp91 and Asp96. A DDXXXD motif motif is present at residues 91-96 (DDLFVD). Arg184 provides a ligand contact to substrate. Residues Asn230, Ser234, and Glu238 each contribute to the Mg(2+) site.

This sequence belongs to the terpene synthase family. Mg(2+) is required as a cofactor.

It carries out the reaction (2E,6E)-farnesyl diphosphate + H2O = (+)-corvol ether B + diphosphate. It catalyses the reaction (2E,6E)-farnesyl diphosphate + H2O = (+)-corvol ether A + diphosphate. Its function is as follows. Terpene synthase that catalyzes the conversion of (2E,6E)-farnesyl diphosphate (FPP) into sesquiterpenes which are important for fungi-environment interactions. Produces a mixture consisting of 8 sesquiterpenes including corvol ethers A and B, as well as traces of epizonarene, gamma-cadinene, delta-cadinene, alpha-cadinene, alpha-cadinol, and an unidentified sesquiterpene. The major product is corvol ether A. The polypeptide is Sesquiterpene synthase MAJ_08936 (Metarhizium majus (strain ARSEF 297)).